Consider the following 626-residue polypeptide: MLDPTYPLFPTFAFLGFVLALVPLPWHLQAWNSGTCFFMVWTALGCLNQFVNSIVWKDNAINSAPIWCEISIRITMGLSVGLPASSLCIIRRLYHIAKVRAVSHTRAEKMRVIIIDALICVLFPLVYIAMQYIVQGHRFNILENVGCYPAVFNTPVTYVVSYIWPVLIGMVSATYSVLALIEFNRHRLQFSQFLHSNSTLSVSRYLRLMALAMTEMCCTVPLGIFVIVLNCTSTPIEPWVSLKATHYWYSRVDQYPAVVWRSSHLVVVCNELTRWLAPVSAMLFFAYFGFAQEARRNYAAAWAWACRALGLPERIATLPTTKSKGPGFAEKFAAKAKGLSSFNVKDFTSEFSSKAHDFTSKAKQYTLPRPMPQTPSSSGFSSSESTRFGSSVDGKELPSPTTKEFSSPIPIHLSGMQTLVSFDSNKDLPSPPAYDVEAQYGPYNIDNRVSYHIADAGVRASYPMGVAYSSDSEHRRINPHATFTSANNDTDEPTSPALPDTPSSCSSSATFSTLQSRDFIVLPSTTDVTRDTGSLPIRRSPAGPPRLPSLSQLFGISSMRAEGRDVEAQVQDVATGTAAPTTTAPAPASTTIAPATTTATAPTTTANIQRGEPDVPTSPRTHRASV.

7 helical membrane-spanning segments follow: residues 8–28 (LFPTFAFLGFVLALVPLPWHL), 36–56 (CFFMVWTALGCLNQFVNSIVW), 70–90 (ISIRITMGLSVGLPASSLCII), 113–133 (IIIDALICVLFPLVYIAMQYI), 163–183 (IWPVLIGMVSATYSVLALIEF), 208–228 (LMALAMTEMCCTVPLGIFVIV), and 271–291 (ELTRWLAPVSAMLFFAYFGFA). Disordered stretches follow at residues 363–409 (KQYT…SSPI), 481–509 (ATFTSANNDTDEPTSPALPDTPSSCSSSA), 524–549 (STTDVTRDTGSLPIRRSPAGPPRLPS), and 571–626 (QDVA…RASV). Residues 376-391 (SSSGFSSSESTRFGSS) are compositionally biased toward low complexity. Residues 574–606 (ATGTAAPTTTAPAPASTTIAPATTTATAPTTTA) show a composition bias toward low complexity.

This sequence belongs to the G-protein coupled receptor 4 family.

Its subcellular location is the membrane. In terms of biological role, receptor for the BAP3 pheromone, a prenylated mating factor. The protein is Pheromone B alpha 3 receptor (BAR3) of Schizophyllum commune (strain H4-8 / FGSC 9210) (Split gill fungus).